We begin with the raw amino-acid sequence, 265 residues long: Leucyl/phenylalanyl-tRNA--protein transferase (265 aa).

The tract at residues 244–265 (LDTGPDPASSSVTEISLRPAAP) is disordered.

Belongs to the L/F-transferase family.

The protein resides in the cytoplasm. It catalyses the reaction N-terminal L-lysyl-[protein] + L-leucyl-tRNA(Leu) = N-terminal L-leucyl-L-lysyl-[protein] + tRNA(Leu) + H(+). The enzyme catalyses N-terminal L-arginyl-[protein] + L-leucyl-tRNA(Leu) = N-terminal L-leucyl-L-arginyl-[protein] + tRNA(Leu) + H(+). It carries out the reaction L-phenylalanyl-tRNA(Phe) + an N-terminal L-alpha-aminoacyl-[protein] = an N-terminal L-phenylalanyl-L-alpha-aminoacyl-[protein] + tRNA(Phe). Functionally, functions in the N-end rule pathway of protein degradation where it conjugates Leu, Phe and, less efficiently, Met from aminoacyl-tRNAs to the N-termini of proteins containing an N-terminal arginine or lysine. The protein is Leucyl/phenylalanyl-tRNA--protein transferase of Methylibium petroleiphilum (strain ATCC BAA-1232 / LMG 22953 / PM1).